Reading from the N-terminus, the 271-residue chain is Phosphonoacetaldehyde hydrolase (271 aa).

The active-site Nucleophile is the Asp-12. 2 residues coordinate Mg(2+): Asp-12 and Ala-14. The active-site Schiff-base intermediate with substrate is Lys-54. Mg(2+) is bound at residue Asp-188.

The protein belongs to the HAD-like hydrolase superfamily. PhnX family. As to quaternary structure, homodimer. Mg(2+) serves as cofactor.

It catalyses the reaction phosphonoacetaldehyde + H2O = acetaldehyde + phosphate + H(+). Its function is as follows. Involved in phosphonate degradation. This is Phosphonoacetaldehyde hydrolase from Vibrio cholerae serotype O1 (strain ATCC 39541 / Classical Ogawa 395 / O395).